Here is a 118-residue protein sequence, read N- to C-terminus: MARIAGVNIPDNKHTVISLTYIYGVGRTTAQKICADAGVNPAAKIKDLSDEQIETLRGEVAKFTTEGDLRRDVNMKIKRLMDLGCYRGLRHRKGLPVRGQRTKTNARTRKGPRKPIRK.

The segment at Arg92–Lys118 is disordered.

Belongs to the universal ribosomal protein uS13 family. In terms of assembly, part of the 30S ribosomal subunit. Forms a loose heterodimer with protein S19. Forms two bridges to the 50S subunit in the 70S ribosome.

Its function is as follows. Located at the top of the head of the 30S subunit, it contacts several helices of the 16S rRNA. In the 70S ribosome it contacts the 23S rRNA (bridge B1a) and protein L5 of the 50S subunit (bridge B1b), connecting the 2 subunits; these bridges are implicated in subunit movement. Contacts the tRNAs in the A and P-sites. The polypeptide is Small ribosomal subunit protein uS13 (Pseudomonas putida (strain W619)).